The following is a 168-amino-acid chain: Photosystem I assembly protein Ycf3 (168 aa).

3 TPR repeats span residues 35-68 (AFTYYRDGMSAQSEGNYAEALQNYYEAMRLEIDP), 72-105 (SYILYNIGLIHTSNGEHTKALEYYFRALERNPFL), and 120-153 (GEQAIRQGDSEIAEAWFDQAAEYWKQAIALTPGN).

It belongs to the Ycf3 family.

The protein localises to the plastid. Its subcellular location is the chloroplast thylakoid membrane. Functionally, essential for the assembly of the photosystem I (PSI) complex. May act as a chaperone-like factor to guide the assembly of the PSI subunits. This is Photosystem I assembly protein Ycf3 from Populus alba (White poplar).